A 396-amino-acid chain; its full sequence is Probable mannan endo-1,4-beta-mannosidase A-2 (396 aa).

Positions 1–21 (MKVPRLLLALGGLASIHIASA) are cleaved as a signal peptide. Position 99 (Trp-99) interacts with substrate. A glycan (N-linked (GlcNAc...) asparagine) is linked at Asn-120. Position 212 (Asn-212) interacts with substrate. Glu-213 functions as the Proton donor in the catalytic mechanism. N-linked (GlcNAc...) asparagine glycosylation occurs at Asn-270. Tyr-288 lines the substrate pocket. Residue Glu-321 is the Nucleophile of the active site. Trp-351 is a substrate binding site.

This sequence belongs to the glycosyl hydrolase 5 (cellulase A) family.

Its subcellular location is the secreted. The enzyme catalyses Random hydrolysis of (1-&gt;4)-beta-D-mannosidic linkages in mannans, galactomannans and glucomannans.. Endo-1,4-mannanase, a crucial enzyme for depolymerization of seed galactomannans and wood galactoglucomannans. This chain is Probable mannan endo-1,4-beta-mannosidase A-2 (manA-2), found in Aspergillus terreus (strain NIH 2624 / FGSC A1156).